We begin with the raw amino-acid sequence, 466 residues long: UDP-N-acetylmuramoylalanine--D-glutamate ligase (466 aa).

Residue 117-123 (GTKGKTT) participates in ATP binding.

This sequence belongs to the MurCDEF family.

It is found in the cytoplasm. The catalysed reaction is UDP-N-acetyl-alpha-D-muramoyl-L-alanine + D-glutamate + ATP = UDP-N-acetyl-alpha-D-muramoyl-L-alanyl-D-glutamate + ADP + phosphate + H(+). The protein operates within cell wall biogenesis; peptidoglycan biosynthesis. Functionally, cell wall formation. Catalyzes the addition of glutamate to the nucleotide precursor UDP-N-acetylmuramoyl-L-alanine (UMA). This Roseiflexus sp. (strain RS-1) protein is UDP-N-acetylmuramoylalanine--D-glutamate ligase.